The sequence spans 194 residues: RNA polymerase II subunit A C-terminal domain phosphatase SSU72 like protein 6 (194 aa).

Belongs to the SSU72 phosphatase family.

The protein localises to the nucleus. It carries out the reaction O-phospho-L-seryl-[protein] + H2O = L-seryl-[protein] + phosphate. The enzyme catalyses O-phospho-L-threonyl-[protein] + H2O = L-threonyl-[protein] + phosphate. Protein phosphatase that catalyzes the dephosphorylation of the C-terminal domain of RNA polymerase II. Plays a role in RNA processing and termination. This chain is RNA polymerase II subunit A C-terminal domain phosphatase SSU72 like protein 6, found in Homo sapiens (Human).